The following is a 261-amino-acid chain: Ribonuclease PH (261 aa).

Phosphate contacts are provided by residues R88 and 126–128; that span reads GTR. Residues 242–261 form a disordered region; the sequence is PYPGVLPEPKNPEPKKKFGA. A compositionally biased stretch (basic and acidic residues) spans 251-261; it reads KNPEPKKKFGA.

Belongs to the RNase PH family. Homohexameric ring arranged as a trimer of dimers.

It carries out the reaction tRNA(n+1) + phosphate = tRNA(n) + a ribonucleoside 5'-diphosphate. In terms of biological role, phosphorolytic 3'-5' exoribonuclease that plays an important role in tRNA 3'-end maturation. Removes nucleotide residues following the 3'-CCA terminus of tRNAs; can also add nucleotides to the ends of RNA molecules by using nucleoside diphosphates as substrates, but this may not be physiologically important. Probably plays a role in initiation of 16S rRNA degradation (leading to ribosome degradation) during starvation. The polypeptide is Ribonuclease PH (Rhodococcus erythropolis (strain PR4 / NBRC 100887)).